A 218-amino-acid polypeptide reads, in one-letter code: Synaptonemal complex central element protein 2 (218 aa).

The segment covering 1–32 (MERQGVDVPHVKCKDQEPQPLGESKEHPRWEE) has biased composition (basic and acidic residues). The disordered stretch occupies residues 1–42 (MERQGVDVPHVKCKDQEPQPLGESKEHPRWEENCEEEAGGGP). The stretch at 61–87 (SSLDSSIDILQKRAQELIENINKSRQK) forms a coiled coil. The interval 171-218 (RWGPDHSRGKSPPRPGNSQPPDVFVSSVAETTSQATASEVQTNRDGEC) is disordered. The span at 198–211 (VAETTSQATASEVQ) shows a compositional bias: polar residues.

This sequence belongs to the SYCE family. As to quaternary structure, homodimer. Found in a complex with SYCP1 and SYCE1. Interacts with SYCP1, SYCE1 and SYCE3. Interacts with TEX12.

It is found in the nucleus. The protein resides in the chromosome. Major component of the transverse central element of synaptonemal complexes (SCS), formed between homologous chromosomes during meiotic prophase. Requires SYCP1 in order to be incorporated into the central element. May have a role in the synaptonemal complex assembly, stabilization and recombination. The polypeptide is Synaptonemal complex central element protein 2 (SYCE2) (Homo sapiens (Human)).